The primary structure comprises 213 residues: Kynurenine formamidase (213 aa).

Residue Trp-18 coordinates substrate. Zn(2+) contacts are provided by His-48, His-52, and Asp-54. His-58 (proton donor/acceptor) is an active-site residue. Zn(2+) contacts are provided by His-160 and Glu-172.

It belongs to the Cyclase 1 superfamily. KynB family. Homodimer. Requires Zn(2+) as cofactor.

The enzyme catalyses N-formyl-L-kynurenine + H2O = L-kynurenine + formate + H(+). The protein operates within amino-acid degradation; L-tryptophan degradation via kynurenine pathway; L-kynurenine from L-tryptophan: step 2/2. Catalyzes the hydrolysis of N-formyl-L-kynurenine to L-kynurenine, the second step in the kynurenine pathway of tryptophan degradation. The polypeptide is Kynurenine formamidase (Burkholderia thailandensis (strain ATCC 700388 / DSM 13276 / CCUG 48851 / CIP 106301 / E264)).